Reading from the N-terminus, the 271-residue chain is Mannosyl-3-phosphoglycerate phosphatase (271 aa).

The active-site Nucleophile is the D13. Positions 13, 15, and 214 each coordinate Mg(2+).

Belongs to the HAD-like hydrolase superfamily. MPGP family. Mg(2+) is required as a cofactor.

The protein resides in the cytoplasm. The enzyme catalyses 2-O-(alpha-D-mannosyl)-3-phosphoglycerate + H2O = (2R)-2-O-(alpha-D-mannosyl)-glycerate + phosphate. In Escherichia coli O6:K15:H31 (strain 536 / UPEC), this protein is Mannosyl-3-phosphoglycerate phosphatase (yedP).